The chain runs to 223 residues: Endonuclease V (223 aa).

Mg(2+) is bound by residues aspartate 44 and aspartate 109.

The protein belongs to the endonuclease V family. Requires Mg(2+) as cofactor.

It localises to the cytoplasm. The catalysed reaction is Endonucleolytic cleavage at apurinic or apyrimidinic sites to products with a 5'-phosphate.. DNA repair enzyme involved in the repair of deaminated bases. Selectively cleaves double-stranded DNA at the second phosphodiester bond 3' to a deoxyinosine leaving behind the intact lesion on the nicked DNA. This Methanothrix thermoacetophila (strain DSM 6194 / JCM 14653 / NBRC 101360 / PT) (Methanosaeta thermophila) protein is Endonuclease V.